Consider the following 368-residue polypeptide: Ethanol acetyltransferase 1 (368 aa).

A mitochondrion-targeting transit peptide spans 1-21; the sequence is MFLSLRPSLSVSRLAVVRRAY. One can recognise an AB hydrolase-1 domain in the interval 67 to 171; the sequence is PIIFFHGLLG…IIDNAPEPQP (105 aa). Residues S140, D164, and H315 each act as charge relay system in the active site. The disordered stretch occupies residues 344-368; it reads RNKDPNNYMQTQNSISNSDTMGQSL. Residues 348 to 368 show a composition bias toward polar residues; that stretch reads PNNYMQTQNSISNSDTMGQSL.

It belongs to the AB hydrolase superfamily.

It localises to the mitochondrion. It carries out the reaction ethanol + acetyl-CoA = ethyl acetate + CoA. The enzyme catalyses acetyl-CoA + H2O = acetate + CoA + H(+). The catalysed reaction is ethyl acetate + H2O = ethanol + acetate + H(+). Its function is as follows. Alcohol acetyltransferase that catalyzes the synthesis of ethyl acetate from ethanol and acetyl-CoA. Can also function as a thioesterase by hydrolyzing acetyl-CoA in the absence of ethanol, as well as esterase hydrolyzing ethyl acetate. The chain is Ethanol acetyltransferase 1 (EAT1) from Kluyveromyces lactis (strain ATCC 8585 / CBS 2359 / DSM 70799 / NBRC 1267 / NRRL Y-1140 / WM37) (Yeast).